The chain runs to 455 residues: Serine--tRNA ligase (455 aa).

Residue 252–254 (TAE) coordinates L-serine. ATP is bound by residues 283-285 (RKE) and Val-299. L-serine is bound at residue Glu-306. An ATP-binding site is contributed by 370 to 373 (EVVS). Position 406 (Thr-406) interacts with L-serine.

It belongs to the class-II aminoacyl-tRNA synthetase family. Type-1 seryl-tRNA synthetase subfamily. As to quaternary structure, homodimer. The tRNA molecule binds across the dimer.

The protein resides in the cytoplasm. The enzyme catalyses tRNA(Ser) + L-serine + ATP = L-seryl-tRNA(Ser) + AMP + diphosphate + H(+). The catalysed reaction is tRNA(Sec) + L-serine + ATP = L-seryl-tRNA(Sec) + AMP + diphosphate + H(+). It functions in the pathway aminoacyl-tRNA biosynthesis; selenocysteinyl-tRNA(Sec) biosynthesis; L-seryl-tRNA(Sec) from L-serine and tRNA(Sec): step 1/1. Catalyzes the attachment of serine to tRNA(Ser). Is also able to aminoacylate tRNA(Sec) with serine, to form the misacylated tRNA L-seryl-tRNA(Sec), which will be further converted into selenocysteinyl-tRNA(Sec). The sequence is that of Serine--tRNA ligase from Pyrococcus abyssi (strain GE5 / Orsay).